Here is a 400-residue protein sequence, read N- to C-terminus: tRNA(Met) cytidine acetate ligase (400 aa).

ATP contacts are provided by residues 7-20 (IVEY…HQYH), Gly101, Asn162, and Arg187.

The protein belongs to the TmcAL family.

The protein resides in the cytoplasm. The catalysed reaction is cytidine(34) in elongator tRNA(Met) + acetate + ATP = N(4)-acetylcytidine(34) in elongator tRNA(Met) + AMP + diphosphate. In terms of biological role, catalyzes the formation of N(4)-acetylcytidine (ac(4)C) at the wobble position of elongator tRNA(Met), using acetate and ATP as substrates. First activates an acetate ion to form acetyladenylate (Ac-AMP) and then transfers the acetyl group to tRNA to form ac(4)C34. The protein is tRNA(Met) cytidine acetate ligase of Oceanobacillus iheyensis (strain DSM 14371 / CIP 107618 / JCM 11309 / KCTC 3954 / HTE831).